The primary structure comprises 124 residues: Conotoxin Im14.2 (124 aa).

A signal peptide spans 1 to 20 (MARFLSILLCFAMATGLAAG). Residues 21-99 (IRYPDRVLGR…AENPVRDPKK (79 aa)) constitute a propeptide that is removed on maturation.

Contain 2 disulfide bonds. In terms of tissue distribution, expressed by the venom duct.

It localises to the secreted. Probable neurotoxin. This is Conotoxin Im14.2 from Conus imperialis (Imperial cone).